Here is a 385-residue protein sequence, read N- to C-terminus: GTP cyclohydrolase 1 type 2 homolog (385 aa).

Residues H64, H65, D103, H333, and E337 each contribute to the a divalent metal cation site.

It belongs to the GTP cyclohydrolase I type 2/NIF3 family. Homohexamer.

This Mycobacterium leprae (strain TN) protein is GTP cyclohydrolase 1 type 2 homolog.